A 236-amino-acid polypeptide reads, in one-letter code: E3 ubiquitin-protein ligase ATL41 (236 aa).

The chain crosses the membrane as a helical span at residues 31–51 (IMLAAVASLSGVILIVFALHL). Residues 108–150 (CAVCLSVLKEQDKARELPNCKHIFHVDCVDTWLTTCSTCPVCR) form an RING-type; atypical zinc finger.

Belongs to the RING-type zinc finger family. ATL subfamily.

The protein localises to the membrane. It carries out the reaction S-ubiquitinyl-[E2 ubiquitin-conjugating enzyme]-L-cysteine + [acceptor protein]-L-lysine = [E2 ubiquitin-conjugating enzyme]-L-cysteine + N(6)-ubiquitinyl-[acceptor protein]-L-lysine.. It functions in the pathway protein modification; protein ubiquitination. In terms of biological role, E3 ubiquitin-protein ligase able to catalyze polyubiquitination with ubiquitin-conjugating enzyme E2 UBC8, UBC10, UBC11, UBC28, UBC29, UBC30, UBC35 and UBC36 in vitro. The sequence is that of E3 ubiquitin-protein ligase ATL41 (ATL41) from Arabidopsis thaliana (Mouse-ear cress).